The chain runs to 148 residues: Secretory phospholipase A2 (148 aa).

The N-terminal stretch at 1–23 (MKLSVLLALGASSLAAAAPAATA) is a signal peptide. Residue Asn61 is glycosylated (N-linked (GlcNAc...) asparagine). Cys62 and Cys78 are disulfide-bonded. Residue His81 is part of the active site. Asp82 lines the Ca(2+) pocket.

It belongs to the phospholipase A2 family. Requires Ca(2+) as cofactor.

The protein localises to the secreted. It carries out the reaction a 1,2-diacyl-sn-glycero-3-phosphocholine + H2O = a 1-acyl-sn-glycero-3-phosphocholine + a fatty acid + H(+). Its function is as follows. Secretory phospholipase that catalyzes the calcium-dependent hydrolysis of the 2-acyl groups in 3-sn-phosphoglycerides. Increases the ability to utilize host-derived nutrients and lipids, and promotes lipid dropplets accumulation. Plays a role in virulence. This is Secretory phospholipase A2 from Arthroderma benhamiae (strain ATCC MYA-4681 / CBS 112371) (Trichophyton mentagrophytes).